Reading from the N-terminus, the 337-residue chain is Holliday junction branch migration complex subunit RuvB (337 aa).

Residues 1–181 (MQRLVEIERF…FGMNFRMQFY (181 aa)) form a large ATPase domain (RuvB-L) region. Residues L20, R21, G62, K65, T66, T67, 128–130 (EDF), R171, Y181, and R218 contribute to the ATP site. Position 66 (T66) interacts with Mg(2+). The interval 182–252 (SPEELSKIIS…RAQYALDELG (71 aa)) is small ATPAse domain (RuvB-S). A head domain (RuvB-H) region spans residues 255–337 (SYGFDEMDIK…MPALDDGGLF (83 aa)). R309 and R314 together coordinate DNA.

The protein belongs to the RuvB family. In terms of assembly, homohexamer. Forms an RuvA(8)-RuvB(12)-Holliday junction (HJ) complex. HJ DNA is sandwiched between 2 RuvA tetramers; dsDNA enters through RuvA and exits via RuvB. An RuvB hexamer assembles on each DNA strand where it exits the tetramer. Each RuvB hexamer is contacted by two RuvA subunits (via domain III) on 2 adjacent RuvB subunits; this complex drives branch migration. In the full resolvosome a probable DNA-RuvA(4)-RuvB(12)-RuvC(2) complex forms which resolves the HJ.

The protein localises to the cytoplasm. It catalyses the reaction ATP + H2O = ADP + phosphate + H(+). In terms of biological role, the RuvA-RuvB-RuvC complex processes Holliday junction (HJ) DNA during genetic recombination and DNA repair, while the RuvA-RuvB complex plays an important role in the rescue of blocked DNA replication forks via replication fork reversal (RFR). RuvA specifically binds to HJ cruciform DNA, conferring on it an open structure. The RuvB hexamer acts as an ATP-dependent pump, pulling dsDNA into and through the RuvAB complex. RuvB forms 2 homohexamers on either side of HJ DNA bound by 1 or 2 RuvA tetramers; 4 subunits per hexamer contact DNA at a time. Coordinated motions by a converter formed by DNA-disengaged RuvB subunits stimulates ATP hydrolysis and nucleotide exchange. Immobilization of the converter enables RuvB to convert the ATP-contained energy into a lever motion, pulling 2 nucleotides of DNA out of the RuvA tetramer per ATP hydrolyzed, thus driving DNA branch migration. The RuvB motors rotate together with the DNA substrate, which together with the progressing nucleotide cycle form the mechanistic basis for DNA recombination by continuous HJ branch migration. Branch migration allows RuvC to scan DNA until it finds its consensus sequence, where it cleaves and resolves cruciform DNA. This Sulfurimonas denitrificans (strain ATCC 33889 / DSM 1251) (Thiomicrospira denitrificans (strain ATCC 33889 / DSM 1251)) protein is Holliday junction branch migration complex subunit RuvB.